Here is a 177-residue protein sequence, read N- to C-terminus: Large ribosomal subunit protein uL6 (177 aa).

It belongs to the universal ribosomal protein uL6 family. Part of the 50S ribosomal subunit.

This protein binds to the 23S rRNA, and is important in its secondary structure. It is located near the subunit interface in the base of the L7/L12 stalk, and near the tRNA binding site of the peptidyltransferase center. The sequence is that of Large ribosomal subunit protein uL6 from Rhizorhabdus wittichii (strain DSM 6014 / CCUG 31198 / JCM 15750 / NBRC 105917 / EY 4224 / RW1) (Sphingomonas wittichii).